Reading from the N-terminus, the 213-residue chain is Vacuolar ATPase assembly integral membrane protein vph2 (213 aa).

The next 2 helical transmembrane spans lie at 113-133 and 142-162; these read ISAIINILFTVVGTVTAVWYC and KIALCAFSAILVLVADTFLYV.

The protein resides in the endoplasmic reticulum membrane. In terms of biological role, required for vacuolar ATPase assembly. This is Vacuolar ATPase assembly integral membrane protein vph2 (vph2) from Schizosaccharomyces pombe (strain 972 / ATCC 24843) (Fission yeast).